The chain runs to 186 residues: Ribosome-recycling factor (186 aa).

Belongs to the RRF family.

The protein localises to the cytoplasm. Functionally, responsible for the release of ribosomes from messenger RNA at the termination of protein biosynthesis. May increase the efficiency of translation by recycling ribosomes from one round of translation to another. This Chlorobium chlorochromatii (strain CaD3) protein is Ribosome-recycling factor.